The sequence spans 600 residues: MSMRTEYCGLVTEHLLGQTVSLCGWVHRRRDHGGVIFIDLRDREGLVQVVCDPDRAEMFAAAEGVRNEFCIQVKGLVRGRPEGTINAGLKSGRIEVLCHELNVLNASVTPPFQLDDDNLSETTRLTHRVLDLRRPQMQHNLRLRYRVAIEARKYLDEQGFIDIETPMLTKSTPEGARDYLVPSRVNAGQFFALPQSPQLFKQLLMVANFDRYYQITKCFRDEDLRADRQPEFTQIDCETSFLGEQEIRDLFEDMIRHIFKTTIGVELDATFPVMPYSEAMARFGSDKPDLRVKLEFTELTDAMKDVDFKVFSTPANTKDGRVAALRVPKGGELTRGDIDGYTEFVRIYGAKGLAWIKVNERAKGRDGLQSPIVKNLHDASIAAILERTGAQDGDIIFFAADRAKVVNDSLGALRLKIGHSEFGKANGLVEAGWKPLWVVDFPMFEYDDEEARYVAAHHPFTSPKDEHLEYLETDPGRCLAKAYDMVLNGWEIGGGSVRIHREEVQSKVFRALKIGPEEAQAKFGFLLDALQYGAPPHGGIAFGLDRIVTMMAGADSIRDVIAFPKTQRAQCLLTQAPSPVDERQLRELHIRLRQPEQPKA.

An L-aspartate-binding site is contributed by Glu174. An aspartate region spans residues Gln198 to Lys201. Arg220 serves as a coordination point for L-aspartate. Residues Arg220–Glu222 and Gln229 each bind ATP. His457 serves as a coordination point for L-aspartate. Glu491 lines the ATP pocket. Arg498 serves as a coordination point for L-aspartate. An ATP-binding site is contributed by Gly543 to Arg546.

This sequence belongs to the class-II aminoacyl-tRNA synthetase family. Type 1 subfamily. As to quaternary structure, homodimer.

The protein localises to the cytoplasm. The catalysed reaction is tRNA(Asx) + L-aspartate + ATP = L-aspartyl-tRNA(Asx) + AMP + diphosphate. Its function is as follows. Aspartyl-tRNA synthetase with relaxed tRNA specificity since it is able to aspartylate not only its cognate tRNA(Asp) but also tRNA(Asn). Reaction proceeds in two steps: L-aspartate is first activated by ATP to form Asp-AMP and then transferred to the acceptor end of tRNA(Asp/Asn). The protein is Aspartate--tRNA(Asp/Asn) ligase of Burkholderia mallei (strain NCTC 10247).